The chain runs to 142 residues: Large ribosomal subunit protein uL11 (142 aa).

This sequence belongs to the universal ribosomal protein uL11 family. As to quaternary structure, part of the ribosomal stalk of the 50S ribosomal subunit. Interacts with L10 and the large rRNA to form the base of the stalk. L10 forms an elongated spine to which L12 dimers bind in a sequential fashion forming a multimeric L10(L12)X complex. One or more lysine residues are methylated.

Its function is as follows. Forms part of the ribosomal stalk which helps the ribosome interact with GTP-bound translation factors. The protein is Large ribosomal subunit protein uL11 of Bartonella henselae (strain ATCC 49882 / DSM 28221 / CCUG 30454 / Houston 1) (Rochalimaea henselae).